Here is a 664-residue protein sequence, read N- to C-terminus: Zinc finger protein 800 (664 aa).

The segment at 69-91 adopts a C2H2-type 1; degenerate zinc-finger fold; it reads FECKLCRSLFRGLPNLITHKKFY. K132 is covalently cross-linked (Glycyl lysine isopeptide (Lys-Gly) (interchain with G-Cter in SUMO2)). 2 stretches are compositionally biased toward polar residues: residues 154-179 and 207-224; these read IEVT…EQSK and SDEQ…SDNS. The segment at 154–224 is disordered; it reads IEVTESSSTP…QADLETSDNS (71 aa). The segment at 230 to 253 adopts a C2H2-type 2 zinc-finger fold; it reads LICCLCRKEFNSRRGVRRHIRKVH. A Glycyl lysine isopeptide (Lys-Gly) (interchain with G-Cter in SUMO2) cross-link involves residue K279. The C2H2-type 3 zinc finger occupies 287 to 310; it reads RSCPVCCKSFATKANVRRHFDEVH. Position 317 is a phosphoserine (S317). At T319 the chain carries Phosphothreonine. The disordered stretch occupies residues 328–349; that stretch reads QPLFLDSISPKKSFKTRKQKSS. S336 is subject to Phosphoserine. Residues 339–348 are compositionally biased toward basic residues; that stretch reads KSFKTRKQKS. The C2H2-type 4 zinc-finger motif lies at 357-382; that stretch reads TACKCLLCKRKYSSQIMLKRHMQIVH. The tract at residues 388–476 is disordered; the sequence is GTNSKREKGP…GGQQKTRKPK (89 aa). A Glycyl lysine isopeptide (Lys-Gly) (interchain with G-Cter in SUMO2) cross-link involves residue K392. Residue K409 forms a Glycyl lysine isopeptide (Lys-Gly) (interchain with G-Cter in SUMO1); alternate linkage. A Glycyl lysine isopeptide (Lys-Gly) (interchain with G-Cter in SUMO2); alternate cross-link involves residue K409. Residues 416 to 436 show a composition bias toward polar residues; the sequence is VESSPPSITHSPQNELKGTNH. Phosphoserine is present on residues S422, S426, S455, S457, S460, and S462. Residues 458-470 show a composition bias toward polar residues; the sequence is PKSTSPSAAGGQQ. A Glycyl lysine isopeptide (Lys-Gly) (interchain with G-Cter in SUMO2) cross-link involves residue K476. 2 consecutive C2H2-type zinc fingers follow at residues 486–508 and 519–542; these read LYCK…IELH and YKCP…TVVH. Disordered regions lie at residues 574–599 and 635–664; these read KRGP…PSKK and HHKK…KALV. The segment covering 577 to 591 has biased composition (basic and acidic residues); that stretch reads PSRDEAKHSDSKHDG. Residue K599 forms a Glycyl lysine isopeptide (Lys-Gly) (interchain with G-Cter in SUMO2) linkage. The C2H2-type 7 zinc-finger motif lies at 618–640; that stretch reads HRCNKCGKAFAKKTYLEHHKKTH. The segment covering 653–664 has biased composition (basic residues); the sequence is TKGRSTRSKALV.

This sequence belongs to the krueppel C2H2-type zinc-finger protein family.

The protein resides in the nucleus. Its function is as follows. May be involved in transcriptional regulation. The sequence is that of Zinc finger protein 800 (ZNF800) from Homo sapiens (Human).